We begin with the raw amino-acid sequence, 325 residues long: MDRTVQQTDYDALSCRMAAITRGYLPSQKQIEQCGYEGYTEVHVEYCNVLRRLSRRLYSRVQKACTTLLPVMNYGSFVRTVSVDVELHKYVAGFGGRAQVVNLGCGSDLRMCMLLERYPELHYVDVDFAETVKMKREVLMQSAELCRRIGASSTSPQEQDCVLHGPRYRLLAGDLRDTGALLELLQKHTDADLPTVVITECVLCYLPREAAQALIREVCGFYKSGSWISYDPIGGGQREDRFGSIMQSNLREFRQLELPTLMEFNSKEKYSARFPAPSNIQTMWEYYMTDISEDEKRKLKTLQFLDEVEELEILLSHYVILVTSW.

Residues Arg-79, Gly-104, Asp-127, 174–175 (DL), and Glu-200 contribute to the S-adenosyl-L-methionine site.

It belongs to the methyltransferase superfamily. LCMT family.

It catalyses the reaction [phosphatase 2A protein]-C-terminal L-leucine + S-adenosyl-L-methionine = [phosphatase 2A protein]-C-terminal L-leucine methyl ester + S-adenosyl-L-homocysteine. Methylates the carboxyl group of the C-terminal leucine residue of protein phosphatase 2A catalytic subunits to form alpha-leucine ester residues. This chain is Leucine carboxyl methyltransferase 1 (PPM1), found in Eremothecium gossypii (strain ATCC 10895 / CBS 109.51 / FGSC 9923 / NRRL Y-1056) (Yeast).